Reading from the N-terminus, the 359-residue chain is 3-dehydroquinate synthase (359 aa).

NAD(+) is bound by residues 71 to 76, 105 to 109, 129 to 130, Lys142, Lys151, and 169 to 172; these read DGEQYK, GVIGD, TT, and CLST. 3 residues coordinate Zn(2+): Glu184, His247, and His264.

This sequence belongs to the sugar phosphate cyclases superfamily. Dehydroquinate synthase family. Requires Co(2+) as cofactor. Zn(2+) serves as cofactor. It depends on NAD(+) as a cofactor.

The protein localises to the cytoplasm. It catalyses the reaction 7-phospho-2-dehydro-3-deoxy-D-arabino-heptonate = 3-dehydroquinate + phosphate. Its pathway is metabolic intermediate biosynthesis; chorismate biosynthesis; chorismate from D-erythrose 4-phosphate and phosphoenolpyruvate: step 2/7. In terms of biological role, catalyzes the conversion of 3-deoxy-D-arabino-heptulosonate 7-phosphate (DAHP) to dehydroquinate (DHQ). The sequence is that of 3-dehydroquinate synthase from Shewanella pealeana (strain ATCC 700345 / ANG-SQ1).